A 454-amino-acid polypeptide reads, in one-letter code: UPF0210 protein Memar_2269 (454 aa).

The protein belongs to the UPF0210 family.

In Methanoculleus marisnigri (strain ATCC 35101 / DSM 1498 / JR1), this protein is UPF0210 protein Memar_2269.